We begin with the raw amino-acid sequence, 297 residues long: Pantothenate synthetase (297 aa).

30 to 37 (MGYLHAGH) is a binding site for ATP. The Proton donor role is filled by H37. Q61 is a binding site for (R)-pantoate. Q61 contacts beta-alanine. An ATP-binding site is contributed by 147–150 (GEKD). (R)-pantoate is bound at residue Q153. Residues V176 and 184–187 (LSSR) contribute to the ATP site.

Belongs to the pantothenate synthetase family. Homodimer.

The protein localises to the cytoplasm. The catalysed reaction is (R)-pantoate + beta-alanine + ATP = (R)-pantothenate + AMP + diphosphate + H(+). Its pathway is cofactor biosynthesis; (R)-pantothenate biosynthesis; (R)-pantothenate from (R)-pantoate and beta-alanine: step 1/1. In terms of biological role, catalyzes the condensation of pantoate with beta-alanine in an ATP-dependent reaction via a pantoyl-adenylate intermediate. The chain is Pantothenate synthetase from Rhizobium etli (strain ATCC 51251 / DSM 11541 / JCM 21823 / NBRC 15573 / CFN 42).